The following is an 848-amino-acid chain: Adenylate cyclase (848 aa).

A catalytic region spans residues 1 to 535 (MYLYIETLKQ…DVSHHFPLRL (535 aa)). Residues 541 to 848 (KALYSPCEIR…DAPLLQQYFS (308 aa)) are regulatory. H609 carries the post-translational modification Phosphohistidine; by CRR.

This sequence belongs to the adenylyl cyclase class-1 family.

It is found in the cytoplasm. It carries out the reaction ATP = 3',5'-cyclic AMP + diphosphate. This is Adenylate cyclase (cyaA) from Escherichia coli O6:H1 (strain CFT073 / ATCC 700928 / UPEC).